Consider the following 337-residue polypeptide: Holliday junction branch migration complex subunit RuvB (337 aa).

Positions Met1–Tyr180 are large ATPase domain (RuvB-L). ATP contacts are provided by residues Leu19, Arg20, Gly61, Lys64, Thr65, Thr66, Glu127–Phe129, Arg170, Tyr180, and Arg217. Thr65 provides a ligand contact to Mg(2+). The small ATPAse domain (RuvB-S) stretch occupies residues Thr181 to Glu251. Positions Glu254–Phe337 are head domain (RuvB-H). Residues Arg309 and Arg314 each contribute to the DNA site.

It belongs to the RuvB family. As to quaternary structure, homohexamer. Forms an RuvA(8)-RuvB(12)-Holliday junction (HJ) complex. HJ DNA is sandwiched between 2 RuvA tetramers; dsDNA enters through RuvA and exits via RuvB. An RuvB hexamer assembles on each DNA strand where it exits the tetramer. Each RuvB hexamer is contacted by two RuvA subunits (via domain III) on 2 adjacent RuvB subunits; this complex drives branch migration. In the full resolvosome a probable DNA-RuvA(4)-RuvB(12)-RuvC(2) complex forms which resolves the HJ.

The protein resides in the cytoplasm. The enzyme catalyses ATP + H2O = ADP + phosphate + H(+). The RuvA-RuvB-RuvC complex processes Holliday junction (HJ) DNA during genetic recombination and DNA repair, while the RuvA-RuvB complex plays an important role in the rescue of blocked DNA replication forks via replication fork reversal (RFR). RuvA specifically binds to HJ cruciform DNA, conferring on it an open structure. The RuvB hexamer acts as an ATP-dependent pump, pulling dsDNA into and through the RuvAB complex. RuvB forms 2 homohexamers on either side of HJ DNA bound by 1 or 2 RuvA tetramers; 4 subunits per hexamer contact DNA at a time. Coordinated motions by a converter formed by DNA-disengaged RuvB subunits stimulates ATP hydrolysis and nucleotide exchange. Immobilization of the converter enables RuvB to convert the ATP-contained energy into a lever motion, pulling 2 nucleotides of DNA out of the RuvA tetramer per ATP hydrolyzed, thus driving DNA branch migration. The RuvB motors rotate together with the DNA substrate, which together with the progressing nucleotide cycle form the mechanistic basis for DNA recombination by continuous HJ branch migration. Branch migration allows RuvC to scan DNA until it finds its consensus sequence, where it cleaves and resolves cruciform DNA. This chain is Holliday junction branch migration complex subunit RuvB, found in Geobacter sp. (strain M21).